Reading from the N-terminus, the 538-residue chain is Ribulokinase 1 (538 aa).

This sequence belongs to the ribulokinase family.

The catalysed reaction is D-ribulose + ATP = D-ribulose 5-phosphate + ADP + H(+). It carries out the reaction L-ribulose + ATP = L-ribulose 5-phosphate + ADP + H(+). Its pathway is carbohydrate degradation; L-arabinose degradation via L-ribulose; D-xylulose 5-phosphate from L-arabinose (bacterial route): step 2/3. This is Ribulokinase 1 from Staphylococcus saprophyticus subsp. saprophyticus (strain ATCC 15305 / DSM 20229 / NCIMB 8711 / NCTC 7292 / S-41).